A 94-amino-acid polypeptide reads, in one-letter code: Probable FAD-linked sulfhydryl oxidase FPV093 (94 aa).

Residues 1-94 form the ERV/ALR sulfhydryl oxidase domain; sequence MDPRYWGSSF…IDIKKVKKLI (94 aa). A disulfide bridge links cysteine 41 with cysteine 44.

This sequence belongs to the poxviruses E10 family. FAD is required as a cofactor.

It catalyses the reaction 2 R'C(R)SH + O2 = R'C(R)S-S(R)CR' + H2O2. In terms of biological role, FAD-dependent sulfhydryl oxidase that catalyzes disulfide bond formation. The protein is Probable FAD-linked sulfhydryl oxidase FPV093 of Fowlpox virus (strain NVSL) (FPV).